The sequence spans 820 residues: Trimethylamine-N-oxide reductase (820 aa).

The segment at residues 1-33 (MAITRRSFLKGVATTSAASVIGPSLLASASANA) is a signal peptide (tat-type signal). S179 serves as a coordination point for Mo-bis(molybdopterin guanine dinucleotide).

It belongs to the prokaryotic molybdopterin-containing oxidoreductase family. The cofactor is Mo-bis(molybdopterin guanine dinucleotide). In terms of processing, predicted to be exported by the Tat system. The position of the signal peptide cleavage has not been experimentally proven.

The protein localises to the periplasm. It catalyses the reaction trimethylamine + 2 Fe(III)-[cytochrome c] + H2O = trimethylamine N-oxide + 2 Fe(II)-[cytochrome c] + 3 H(+). Functionally, reduces trimethylamine-N-oxide (TMAO) into trimethylamine; an anaerobic reaction coupled to energy-yielding reactions. This chain is Trimethylamine-N-oxide reductase (torA), found in Vibrio vulnificus (strain YJ016).